The primary structure comprises 328 residues: Coiled-coil domain-containing protein 54 (328 aa).

Positions 93–148 form a coiled coil; it reads KIQEKTDFFQKQMQVLETKMNVNENKQCATAEDIFSVKEDVDALKKKVTELGNQNS. Position 182 is a phosphothreonine (Thr-182).

The chain is Coiled-coil domain-containing protein 54 (CCDC54) from Bos taurus (Bovine).